Here is a 309-residue protein sequence, read N- to C-terminus: DNA replication terminus site-binding protein (309 aa).

The protein belongs to the Tus family.

The protein resides in the cytoplasm. Trans-acting protein required for termination of DNA replication. Binds to DNA replication terminator sequences (terA to terF) to prevent the passage of replication forks. The termination efficiency will be affected by the affinity of this protein for the terminator sequence. This is DNA replication terminus site-binding protein from Yersinia enterocolitica serotype O:8 / biotype 1B (strain NCTC 13174 / 8081).